We begin with the raw amino-acid sequence, 422 residues long: 5'-deoxyadenosine deaminase (422 aa).

Residues H57 and H59 each coordinate Zn(2+). Residues E86 and H178 each coordinate substrate. Residue H205 participates in Zn(2+) binding. Positions 208 and 294 each coordinate substrate. D294 contacts Zn(2+).

It belongs to the metallo-dependent hydrolases superfamily. MTA/SAH deaminase family. Homotetramer. Requires Zn(2+) as cofactor.

It catalyses the reaction 5'-deoxyadenosine + H2O + H(+) = 5'-deoxyinosine + NH4(+). The catalysed reaction is S-adenosyl-L-homocysteine + H2O + H(+) = S-inosyl-L-homocysteine + NH4(+). It carries out the reaction S-methyl-5'-thioadenosine + H2O + H(+) = S-methyl-5'-thioinosine + NH4(+). The enzyme catalyses adenosine + H2O + H(+) = inosine + NH4(+). It functions in the pathway amino-acid biosynthesis; S-adenosyl-L-methionine biosynthesis. Catalyzes the deamination of three SAM-derived enzymatic products, namely 5'-deoxyadenosine, S-adenosyl-L-homocysteine, and 5'-methylthioadenosine, to produce the inosine analogs. Can also deaminate adenosine. The preferred substrate for this enzyme is 5'-deoxyadenosine, but all these substrates are efficiently deaminated. Likely functions in a S-adenosyl-L-methionine (SAM) recycling pathway from S-adenosyl-L-homocysteine (SAH) produced from SAM-dependent methylation reactions. May also be involved in the recycling of 5'-deoxyadenosine, whereupon the 5'-deoxyribose moiety of 5'-deoxyinosine is further metabolized to deoxyhexoses used for the biosynthesis of aromatic amino acids in methanogens. The protein is 5'-deoxyadenosine deaminase of Methanococcus vannielii (strain ATCC 35089 / DSM 1224 / JCM 13029 / OCM 148 / SB).